The following is a 456-amino-acid chain: IQ domain-containing protein IQM3 (456 aa).

The IQ domain occupies 46-75; sequence TRLAAVKVQKVYRSYRTRRRLADSVVVAEE. The segment at 315–358 is disordered; sequence SEDSDSYDDYVKSNGGSEPEPLKKEDTTFQAETETDENGNGTVG.

In terms of tissue distribution, expressed in roots, rosette and cauline leaves, flowers and siliques, and at lower levels in stems.

The protein resides in the cytoplasm. Its subcellular location is the nucleus. In terms of biological role, may be involved in biotic and abiotic stress responses. This Arabidopsis thaliana (Mouse-ear cress) protein is IQ domain-containing protein IQM3.